The primary structure comprises 230 residues: Broad specificity amino-acid racemase YgeA (230 aa).

Substrate is bound by residues methionine 10, glutamine 52, and threonine 83 to threonine 85. The Proton donor role is filled by threonine 83. The active-site Proton acceptor is the cysteine 197. Position 198–199 (threonine 198–glutamate 199) interacts with substrate.

This sequence belongs to the aspartate/glutamate racemases family.

The enzyme catalyses an L-alpha-amino acid = a D-alpha-amino acid. It catalyses the reaction L-homoserine = D-homoserine. Functionally, amino-acid racemase able to utilize a broad range of substrates. Highest activity is observed with L-homoserine and D-homoserine. Has tenfold lower activity against L-methionine, L-leucine, L-valine and L-histidine. Has low activity with L-norvaline, L-asparagine, D-methionine, L-aminobutyric acid, L-isoleucine, L-serine, L-norleucine, L-alanine, L-glutamine, LL-diaminopimelic acid and L-phenylalanine. Has no activity against ten L-amino acids (Thr, Glu, Asp, Arg, Lys, Tyr, Trp, Orn, Cit and Aad). D-amino acids might be used as components of peptidoglycan and/or be involved in peptidoglycan metabolism and remodeling. This is Broad specificity amino-acid racemase YgeA (ygeA) from Escherichia coli (strain K12).